The following is a 348-amino-acid chain: MLVSDFQFDLPDELIARYPMPERSASRLLMLDGNSGETRHGQFRDVLDLLQPGDLLVFNNTRVIPARMFGQKASGGKLEILVERILDDHSVLAHVRASKAPKPGTQILLDNGFSAKMVARHDTLFELHFAGDLPVLDILNQIGHMPLPPYIDRPDENSDKERYQTVYNQRPGAVAAPTAGLHFDEPLLAALREKGVDFAYVTLHVGAGTFQPVRVERLEDHQMHSEYAEVPAEVIAKINATRERGGRVVAVGTTSVRSLETAAQASLKAGKPLSPFFGDTSIFIFPGYQYQLVDVLITNFHLPGSTLIMLVSAFAGYEHVMNAYQEAITSGYRFFSYGDAMFITRQSL.

This sequence belongs to the QueA family. As to quaternary structure, monomer.

The protein resides in the cytoplasm. The enzyme catalyses 7-aminomethyl-7-carbaguanosine(34) in tRNA + S-adenosyl-L-methionine = epoxyqueuosine(34) in tRNA + adenine + L-methionine + 2 H(+). It functions in the pathway tRNA modification; tRNA-queuosine biosynthesis. Transfers and isomerizes the ribose moiety from AdoMet to the 7-aminomethyl group of 7-deazaguanine (preQ1-tRNA) to give epoxyqueuosine (oQ-tRNA). The chain is S-adenosylmethionine:tRNA ribosyltransferase-isomerase from Tolumonas auensis (strain DSM 9187 / NBRC 110442 / TA 4).